Here is a 363-residue protein sequence, read N- to C-terminus: Chorismate synthase (363 aa).

The interval Ser-36–Arg-58 is disordered. NADP(+) is bound at residue Arg-47. Residues Arg-124–Ser-126, Gly-286, Lys-301–Thr-305, and Arg-327 each bind FMN.

This sequence belongs to the chorismate synthase family. Homotetramer. It depends on FMNH2 as a cofactor.

It carries out the reaction 5-O-(1-carboxyvinyl)-3-phosphoshikimate = chorismate + phosphate. The protein operates within metabolic intermediate biosynthesis; chorismate biosynthesis; chorismate from D-erythrose 4-phosphate and phosphoenolpyruvate: step 7/7. In terms of biological role, catalyzes the anti-1,4-elimination of the C-3 phosphate and the C-6 proR hydrogen from 5-enolpyruvylshikimate-3-phosphate (EPSP) to yield chorismate, which is the branch point compound that serves as the starting substrate for the three terminal pathways of aromatic amino acid biosynthesis. This reaction introduces a second double bond into the aromatic ring system. This chain is Chorismate synthase, found in Crocosphaera subtropica (strain ATCC 51142 / BH68) (Cyanothece sp. (strain ATCC 51142)).